Here is a 208-residue protein sequence, read N- to C-terminus: Transmembrane emp24 domain-containing protein p24beta2 (208 aa).

Positions 1 to 21 (MSLKGTIVLLGLLWSFQATLG) are cleaved as a signal peptide. Residues 22-176 (IRFVIDREEC…ENMSKRAVHK (155 aa)) are Lumenal-facing. Positions 29–116 (EECFSHKAEY…HETIDFDVQL (88 aa)) constitute a GOLD domain. Positions 134-149 (LMEQISKLEEALYNIQ) form a coiled coil. An N-linked (GlcNAc...) asparagine glycan is attached at Asn-168. The helical transmembrane segment at 177-195 (ALFESFALIGASFLQVYLL) threads the bilayer. The Cytoplasmic portion of the chain corresponds to 196-208 (RRLFERKLGMSRV). A COPII vesicle coat-binding motif is present at residues 198 to 199 (LF). The COPI vesicle coat-binding signature appears at 198–208 (LFERKLGMSRV). The short motif at 207-208 (RV) is the Required for the export from the endoplasmic reticulum to the Golgi element.

This sequence belongs to the EMP24/GP25L family. Probably oligomerizes with other members of the EMP24/GP25L family. Associates with the COPI vesicle coat (coatomer). Associates with the COPII vesicle coat (coatomer). Interacts with p24delta5.

It localises to the golgi apparatus. The protein localises to the cis-Golgi network membrane. Its subcellular location is the golgi stack membrane. Its function is as follows. Involved in vesicular protein trafficking. Mainly functions in the early secretory pathway but also in post-Golgi membranes. Thought to act as cargo receptor at the lumenal side for incorporation of secretory cargo molecules into transport vesicles and to be involved in vesicle coat formation at the cytoplasmic side. Interacts with p24delta5 at endoplasmic reticulum export sites for endoplasmic reticulum exit and coupled transport to the Golgi apparatus. The sequence is that of Transmembrane emp24 domain-containing protein p24beta2 from Arabidopsis thaliana (Mouse-ear cress).